Reading from the N-terminus, the 330-residue chain is Methylthioribose-1-phosphate isomerase (330 aa).

Substrate contacts are provided by residues 49–51 (RGA), R83, and Q179. The active-site Proton donor is the D220. 230–231 (NK) serves as a coordination point for substrate.

The protein belongs to the eIF-2B alpha/beta/delta subunits family. MtnA subfamily.

It catalyses the reaction 5-(methylsulfanyl)-alpha-D-ribose 1-phosphate = 5-(methylsulfanyl)-D-ribulose 1-phosphate. It functions in the pathway amino-acid biosynthesis; L-methionine biosynthesis via salvage pathway; L-methionine from S-methyl-5-thio-alpha-D-ribose 1-phosphate: step 1/6. Catalyzes the interconversion of methylthioribose-1-phosphate (MTR-1-P) into methylthioribulose-1-phosphate (MTRu-1-P). This Thermus thermophilus (strain ATCC BAA-163 / DSM 7039 / HB27) protein is Methylthioribose-1-phosphate isomerase.